Reading from the N-terminus, the 103-residue chain is Small ribosomal subunit protein uS10 (103 aa).

The protein belongs to the universal ribosomal protein uS10 family. As to quaternary structure, part of the 30S ribosomal subunit.

Functionally, involved in the binding of tRNA to the ribosomes. This chain is Small ribosomal subunit protein uS10, found in Chlorobaculum parvum (strain DSM 263 / NCIMB 8327) (Chlorobium vibrioforme subsp. thiosulfatophilum).